The sequence spans 347 residues: Fructose-1,6-bisphosphatase class 1 (347 aa).

Residues Glu106, Asp128, Ile130, and Asp131 each contribute to the Mg(2+) site. Substrate is bound by residues 131-134 (DGSS), Asn223, Tyr251, and Lys281. Glu287 lines the Mg(2+) pocket.

This sequence belongs to the FBPase class 1 family. In terms of assembly, homotetramer. It depends on Mg(2+) as a cofactor.

The protein localises to the cytoplasm. It catalyses the reaction beta-D-fructose 1,6-bisphosphate + H2O = beta-D-fructose 6-phosphate + phosphate. Its pathway is carbohydrate biosynthesis; Calvin cycle. The protein is Fructose-1,6-bisphosphatase class 1 of Synechocystis sp. (strain ATCC 27184 / PCC 6803 / Kazusa).